Consider the following 631-residue polypeptide: Golgin subfamily A member 8R (631 aa).

Residues 1–72 form a disordered region; the sequence is MAEETQHNKL…REGPTSSATL (72 aa). Over residues 38 to 50 the composition is skewed to polar residues; it reads TNGSIPETATSGG. Coiled-coil stretches lie at residues 85–149, 209–247, and 303–419; these read VLDS…NTDL, ELEQSLQDQALLKAQLTQLKESFQQLQLERDECAEHIEG, and SEVE…LSLM. Disordered regions lie at residues 422–451, 502–523, and 551–610; these read PGEGHGGEHLDSEGEEAPQPMPSVPEDPES, AKDAALGGGHHQAGAQGGDEGE, and NSAD…QEHP. Gly residues predominate over residues 507 to 519; it reads LGGGHHQAGAQGG. Residues 568 to 577 show a composition bias toward basic and acidic residues; that stretch reads AADKHGDLRE.

It belongs to the GOLGA8 family.

The sequence is that of Golgin subfamily A member 8R from Homo sapiens (Human).